The primary structure comprises 316 residues: MSLRVVYLGTPQFAATVLKTLLDAHTHIVGIVTRADKPQKRSSKLISSPVKQLALSKNIPLLQPIKTTDPAFLAQLREWQADVFIVVAYGVILKQELLDIPTYGCYNLHAGLLPAYRGAAPIQRCIMDGGVLSGNTVIRMDAGMDTGDIANVNYVAIGEDMTAGGLAEALAASGGELLLKTLQEIEAGTVRHVPQNEAMATLAPKLTKEEGGIHWDAPASQVYAHIRGVSPAPGAWTRYLSQGKGARRLGVLSARMESFSGNYGDPGEVLGVSGEDLLIACRQGALRLRMVQPEGKALMKAKDFFNGQSRLVSKLF.

111–114 (GLLP) contributes to the (6S)-5,6,7,8-tetrahydrofolate binding site.

The protein belongs to the Fmt family.

It catalyses the reaction L-methionyl-tRNA(fMet) + (6R)-10-formyltetrahydrofolate = N-formyl-L-methionyl-tRNA(fMet) + (6S)-5,6,7,8-tetrahydrofolate + H(+). In terms of biological role, attaches a formyl group to the free amino group of methionyl-tRNA(fMet). The formyl group appears to play a dual role in the initiator identity of N-formylmethionyl-tRNA by promoting its recognition by IF2 and preventing the misappropriation of this tRNA by the elongation apparatus. In Chlamydia trachomatis serovar A (strain ATCC VR-571B / DSM 19440 / HAR-13), this protein is Methionyl-tRNA formyltransferase.